The chain runs to 484 residues: Protein nucleotidyltransferase YdiU (484 aa).

ATP contacts are provided by glycine 81, glycine 83, arginine 84, lysine 103, aspartate 115, glycine 116, arginine 166, and arginine 173. The active-site Proton acceptor is the aspartate 244. The Mg(2+) site is built by asparagine 245 and aspartate 254. Aspartate 254 is a binding site for ATP.

This sequence belongs to the SELO family. It depends on Mg(2+) as a cofactor. Requires Mn(2+) as cofactor.

The enzyme catalyses L-seryl-[protein] + ATP = 3-O-(5'-adenylyl)-L-seryl-[protein] + diphosphate. It carries out the reaction L-threonyl-[protein] + ATP = 3-O-(5'-adenylyl)-L-threonyl-[protein] + diphosphate. The catalysed reaction is L-tyrosyl-[protein] + ATP = O-(5'-adenylyl)-L-tyrosyl-[protein] + diphosphate. It catalyses the reaction L-histidyl-[protein] + UTP = N(tele)-(5'-uridylyl)-L-histidyl-[protein] + diphosphate. The enzyme catalyses L-seryl-[protein] + UTP = O-(5'-uridylyl)-L-seryl-[protein] + diphosphate. It carries out the reaction L-tyrosyl-[protein] + UTP = O-(5'-uridylyl)-L-tyrosyl-[protein] + diphosphate. Its function is as follows. Nucleotidyltransferase involved in the post-translational modification of proteins. It can catalyze the addition of adenosine monophosphate (AMP) or uridine monophosphate (UMP) to a protein, resulting in modifications known as AMPylation and UMPylation. The sequence is that of Protein nucleotidyltransferase YdiU from Shewanella baltica (strain OS223).